The sequence spans 497 residues: MNIMSDVRVRFCPSPTGTPHVGMVRTALFNWAHARHTGGKLIFRIEDTDAARDSEESYQAIIDSLKWLGMDWDEGVIVGGPHEPYRQSQRMDIYKDVLEKLKEAGFVYPAYSTAQEVEERHKAAGRDPKLGYDNYDRTLTDEQIAAFEAEGRQPVWRLRMPERDWKWNDLVRGEIEFKSSTQPDYVVARSNGAPLYTLVNPVDDALMGITHVLRGEDLLPSTPRQLALYEALKVIGVAQQTPEFGHLPFVMGEGNKKLSKRDPQSNLFNHRDAGIIPEGMLNYLALLGWSLAGEKDIFSVDELVENFDVTNVLANPARFDQKKLEAINADHIRLLEPKDFEQRLRAYLTEYTDFPTDYPAEKFAIAAELVQTRIKMLGDAYGLLSFLAIADEDLTLDEKSAKKNLKETAIPALDAGIAALEGVEEWTTPAIEAALHKALIEDLDLKPRVAFGALRVGISGQAVSPPLFESMELLGKESTLTRLRATREVTPYQVAAE.

A 'HIGH' region motif is present at residues 13-23; that stretch reads PSPTGTPHVGM. A 'KMSKS' region motif is present at residues 257 to 261; sequence KLSKR. An ATP-binding site is contributed by lysine 260.

The protein belongs to the class-I aminoacyl-tRNA synthetase family. Glutamate--tRNA ligase type 1 subfamily. As to quaternary structure, monomer.

The protein localises to the cytoplasm. The enzyme catalyses tRNA(Glu) + L-glutamate + ATP = L-glutamyl-tRNA(Glu) + AMP + diphosphate. Its function is as follows. Catalyzes the attachment of glutamate to tRNA(Glu) in a two-step reaction: glutamate is first activated by ATP to form Glu-AMP and then transferred to the acceptor end of tRNA(Glu). The sequence is that of Glutamate--tRNA ligase from Corynebacterium diphtheriae (strain ATCC 700971 / NCTC 13129 / Biotype gravis).